Consider the following 876-residue polypeptide: Leucine--tRNA ligase (876 aa).

Residues 42–52 (PYPSGKLHMGH) carry the 'HIGH' region motif. Residues 634-638 (KMSKS) carry the 'KMSKS' region motif. Residue lysine 637 coordinates ATP.

Belongs to the class-I aminoacyl-tRNA synthetase family.

The protein localises to the cytoplasm. It catalyses the reaction tRNA(Leu) + L-leucine + ATP = L-leucyl-tRNA(Leu) + AMP + diphosphate. The protein is Leucine--tRNA ligase of Neisseria gonorrhoeae (strain NCCP11945).